The sequence spans 711 residues: Probable cadmium-transporting ATPase (711 aa).

The HMA domain occupies 3–66; sequence EKTVYRVDGL…AGAFEHLKII (64 aa). Positions 14 and 17 each coordinate Cd(2+). 5 consecutive transmembrane segments (helical) span residues 89–109, 111–131, 151–171, 317–337, and 347–367; these read WRLL…IMNG, DFYL…YSLF, IAII…VVIL, TPAI…LFGG, and LSVL…VAIV. Residue Asp398 is the 4-aspartylphosphate intermediate of the active site. A helical membrane pass occupies residues 669 to 689; it reads VIKLIALLLVIPGWLTLWIAI.

This sequence belongs to the cation transport ATPase (P-type) (TC 3.A.3) family. Type IB subfamily.

Its subcellular location is the cell membrane. The enzyme catalyses Cd(2+)(in) + ATP + H2O = Cd(2+)(out) + ADP + phosphate + H(+). In terms of biological role, couples the hydrolysis of ATP with the export of cadmium. The sequence is that of Probable cadmium-transporting ATPase (cadA) from Listeria monocytogenes.